The chain runs to 72 residues: Sec-independent protein translocase protein TatA (72 aa).

A helical membrane pass occupies residues 1–21 (MAGLSIWHVVIFAIVVILLFG). A disordered region spans residues 47–72 (DEAASLNSPRTIDAQVKTSESTSVKS). Polar residues predominate over residues 51 to 72 (SLNSPRTIDAQVKTSESTSVKS).

This sequence belongs to the TatA/E family. As to quaternary structure, the Tat system comprises two distinct complexes: a TatABC complex, containing multiple copies of TatA, TatB and TatC subunits, and a separate TatA complex, containing only TatA subunits. Substrates initially bind to the TatABC complex, which probably triggers association of the separate TatA complex to form the active translocon.

Its subcellular location is the cell inner membrane. Functionally, part of the twin-arginine translocation (Tat) system that transports large folded proteins containing a characteristic twin-arginine motif in their signal peptide across membranes. TatA could form the protein-conducting channel of the Tat system. In Acinetobacter baumannii (strain AB307-0294), this protein is Sec-independent protein translocase protein TatA.